Reading from the N-terminus, the 168-residue chain is Gremlin-2 (168 aa).

Positions 1–21 (MFWKLSLTLLLVAVLVKVAET) are cleaved as a signal peptide. An N-linked (GlcNAc...) asparagine glycan is attached at Asn-40. 4 disulfide bridges follow: Cys-73/Cys-123, Cys-87/Cys-137, Cys-97/Cys-155, and Cys-101/Cys-157. The CTCK domain maps to 73-163 (CKTQPLRQTV…HCRCMSVNLS (91 aa)). Asn-161 carries N-linked (GlcNAc...) asparagine glycosylation.

Belongs to the DAN family. As to quaternary structure, homodimer. Interacts with BMP2, BMP4 and BMP7, but has lower affinity for BMP7 than for BMP2 and BMP4. Binds heparin; this impairs the interaction with BMP2. In terms of processing, N-glycosylated. In terms of tissue distribution, highly expressed in the ovary, followed by brain, spleen, colon, kidney and uterus. In ovary expressed in granulosa cells of selective early antral follicles.

The protein localises to the secreted. Its function is as follows. Cytokine that inhibits the activity of BMP2 and BMP4 in a dose-dependent manner, and thereby modulates signaling by BMP family members. Contributes to the regulation of embryonic morphogenesis via BMP family members. Antagonizes BMP4-induced suppression of progesterone production in granulosa cells. This chain is Gremlin-2 (Grem2), found in Mus musculus (Mouse).